The following is a 180-amino-acid chain: Large ribosomal subunit protein uL5 (180 aa).

The protein belongs to the universal ribosomal protein uL5 family. Part of the 50S ribosomal subunit; part of the 5S rRNA/L5/L18/L25 subcomplex. Contacts the 5S rRNA and the P site tRNA. Forms a bridge to the 30S subunit in the 70S ribosome.

Functionally, this is one of the proteins that bind and probably mediate the attachment of the 5S RNA into the large ribosomal subunit, where it forms part of the central protuberance. In the 70S ribosome it contacts protein S13 of the 30S subunit (bridge B1b), connecting the 2 subunits; this bridge is implicated in subunit movement. Contacts the P site tRNA; the 5S rRNA and some of its associated proteins might help stabilize positioning of ribosome-bound tRNAs. In Chloroflexus aggregans (strain MD-66 / DSM 9485), this protein is Large ribosomal subunit protein uL5.